Here is a 249-residue protein sequence, read N- to C-terminus: MWQLLLPTALVLTAFSGIQAGLQKAVVNLDPKWVRVLEEDSVTLRCQGTFSPEDNSIKWFHNESLIPHQDANYVIQSARVKDSGMYRCQTALSTISDPVQLEVHMGWLLLQTTKWLFQEGDPIHLRCHSWQNRPVRKVTYLQNGKGKKYFHENSELLIPKATHNDSGSYFCRGLIGHNNKSSASFRISLGDPGSPSMFPPWHQITFCLLIGLLFAIDTVLYFSVRRGLQSPVADYEEPKIQWSKEPQDK.

Residues 1 to 20 (MWQLLLPTALVLTAFSGIQA) form the signal peptide. The Extracellular segment spans residues 21 to 203 (GLQKAVVNLD…SPSMFPPWHQ (183 aa)). 2 consecutive Ig-like C2-type domains span residues 22-102 (LQKA…VQLE) and 119-188 (EGDP…FRIS). 2 cysteine pairs are disulfide-bonded: Cys-46-Cys-88 and Cys-127-Cys-171. 3 N-linked (GlcNAc...) asparagine glycosylation sites follow: Asn-62, Asn-164, and Asn-179. A helical transmembrane segment spans residues 204–224 (ITFCLLIGLLFAIDTVLYFSV). The Cytoplasmic portion of the chain corresponds to 225-249 (RRGLQSPVADYEEPKIQWSKEPQDK). Tyr-235 is subject to Phosphotyrosine.

Forms a heterooligomeric complex with ITAM-containing signaling subunits FCER1G. Interacts (via transmembrane domain) with signaling subunits; this interaction is a prerequisite for receptor complex expression on the cell surface and intracellular signal transduction. Binds the Fc region of antigen-complexed IgG. N-glycosylated. Post-translationally, phosphorylated following receptor ligation. As to expression, detected on myeloid cells, peripheral blood monocytes, splenic and bone marrow dendritic cells, and thioglycollate-elicited macrophages and neutrophils but absent from lymphoid populations with no expression observed on T cells, B cells, NK cells or other granulocytes (at protein level). Expressed in peripheral blood leukocytes, spleen, liver, thymus and small intestine. Expressed in splenic dendritic cell subsets (at protein level).

It is found in the cell membrane. Functionally, receptor for the invariable Fc fragment of immunoglobulin gamma (IgG). Binds with intermediate affinity to both IgG2a and IgG2b. Can bind to IgG2a and IgG2b monomers. Does not display binding to IgG1 or IgG3. Recognizes neutralizing virus-specific IgGs displayed on the cell surface of infected cells and triggers antibody-dependent cellular cytotoxicity (ADCC). Confers protection to lethal influenza virus infection. On splenic dendritic cells, uptakes antigen immune complexes and efficiently divert them into MHC class I and II antigen presentation pathways to provide for superior priming of CD4-positive and CD8-positive T cell immune responses. Mediates neutrophil activation by IgG complexes redundantly with FCGR2A. Plays a role in promoting bone resorption by enhancing osteoclast differentiation following binding to IgG2a. Also acts as a receptor for the Fc region of immunoglobulin epsilon (IgE). Binds with low affinity to both the a and b allotypes of IgE. Has also been shown to bind to IgE allotype a only but not to allotype b. Binds aggregated IgE but not the monomeric form and bound monomeric IgG is readily displaced by IgE complexes. Binding to IgE promotes macrophage-mediated phagocytosis, antigen presentation to T cells, production of pro-inflammatory cytokines and the late phase of cutaneous allergic reactions. Mediates enhanced ADCC in response to afucosylated IgGs. This is Low affinity immunoglobulin gamma Fc region receptor III-A from Mus musculus (Mouse).